We begin with the raw amino-acid sequence, 250 residues long: Probable transcriptional regulatory protein Rxyl_1318 (250 aa).

The protein belongs to the TACO1 family.

The protein localises to the cytoplasm. This is Probable transcriptional regulatory protein Rxyl_1318 from Rubrobacter xylanophilus (strain DSM 9941 / JCM 11954 / NBRC 16129 / PRD-1).